A 435-amino-acid chain; its full sequence is uncharacterized protein (435 aa).

The next 12 helical transmembrane spans lie at 14–34, 44–64, 84–104, 123–143, 153–173, 187–207, 224–244, 267–287, 324–344, 346–366, 375–395, and 400–420; these read VSMAVGVMIGASIFSIFGVGA, TFILSGIYALLVAYSYTKLGA, IITGALSILLWMSYVISIALF, FNIAITEIGIVAFFTALNFFG, FIVLVKLLILGLFIFAGLITI, VSGMIFASAIFFLSYMGFGVI, AIFISILIVMFVYVGVAISAI, FLGNLGFLLISIGALFSISSA, LYITSALGVLFALLFNMEGVA, ITSAVFMVIYLFVILSHYILI, IVIFSFIVVLGVFLLLLYYQW, and FVFYGIIATFIGVLIFEIIYR.

It localises to the cell membrane. This is an uncharacterized protein from Methanocaldococcus jannaschii (strain ATCC 43067 / DSM 2661 / JAL-1 / JCM 10045 / NBRC 100440) (Methanococcus jannaschii).